We begin with the raw amino-acid sequence, 1318 residues long: 1-phosphatidylinositol 4,5-bisphosphate phosphodiesterase classes I and II (1318 aa).

One can recognise a PI-PLC X-box domain in the interval 318–466 (DDMDQPMSHY…LRRKIIIKNK (149 aa)). Active-site residues include H333 and H378. 2 residues coordinate substrate: K464 and K466. Over residues 466–481 (KKKHHHHHHHHHHKKP) the composition is skewed to basic residues. Disordered stretches follow at residues 466-489 (KKKH…TPAA) and 505-594 (QQVG…KETE). Low complexity-rich tracts occupy residues 528–543 (ATGT…AGHA) and 554–563 (KDSTGSSDSD). A compositionally biased stretch (polar residues) spans 571 to 580 (LPNTTPNLPS). Residues 585-594 (PPEKAQKETE) show a composition bias toward basic and acidic residues. One can recognise a PI-PLC Y-box domain in the interval 599 to 715 (ISALVNYVQP…GYLLKPEFMR (117 aa)). Substrate contacts are provided by S628 and R655. Residues 715–843 (RRSDRRLDPF…NLRSEVGQPI (129 aa)) form the C2 domain. 2 disordered regions span residues 1080–1112 (LDLG…TQES) and 1296–1318 (GSHS…EMKT). The span at 1088–1107 (ESAAADAGEDLAGGSSSLDG) shows a compositional bias: low complexity.

In terms of tissue distribution, expressed in neuronal cell bodies of the optic lobe, central brain, and thoracic ganglia in adults, and the brain of larvae.

It catalyses the reaction a 1,2-diacyl-sn-glycero-3-phospho-(1D-myo-inositol-4,5-bisphosphate) + H2O = 1D-myo-inositol 1,4,5-trisphosphate + a 1,2-diacyl-sn-glycerol + H(+). In terms of biological role, the production of the second messenger molecules diacylglycerol (DAG) and inositol 1,4,5-trisphosphate (IP3) is mediated by activated phosphatidylinositol-specific phospholipase C enzymes. The chain is 1-phosphatidylinositol 4,5-bisphosphate phosphodiesterase classes I and II (Plc21C) from Drosophila melanogaster (Fruit fly).